A 144-amino-acid chain; its full sequence is Effector EagT6 (144 aa).

Homodimer. Two dimers interact with Tse6; this interaction is crucial for Tse6 loading onto VgrG1a.

Plays an essential role in toxin Tse6 delivery to target cells and specifically in the loading of Tse6 onto VgrG1a. This chain is Effector EagT6, found in Pseudomonas aeruginosa (strain ATCC 15692 / DSM 22644 / CIP 104116 / JCM 14847 / LMG 12228 / 1C / PRS 101 / PAO1).